Reading from the N-terminus, the 328-residue chain is Gonadotropin-releasing hormone receptor (328 aa).

Over 1–38 (MQDDTSSEQNPTHCSAINSSVPLVQGALPTLTLSGKIR) the chain is Extracellular. A glycan (N-linked (GlcNAc...) asparagine) is linked at Asn-18. The chain crosses the membrane as a helical span at residues 39 to 59 (VTVTFFLFLVSTTLNASFLLK). Topologically, residues 60 to 84 (LQKWTQKKEKGKKLSRMKVLLKHLT) are cytoplasmic. The helical transmembrane segment at 85–105 (LANLLETLIVMPLDGMWNITV) threads the bilayer. Topologically, residues 106-115 (QWYAGELLCK) are extracellular. A disulfide bridge connects residues Cys-114 and Cys-196. A helical membrane pass occupies residues 116–136 (ILSYLKLFSMYAPAFMMVVIS). Residues 137–160 (LDRSMAITRPLPVQSNRKLEQSMT) are Cytoplasmic-facing. Residues 161 to 181 (GLAWGLSSVLAGPQLYIFKMI) form a helical membrane-spanning segment. The Extracellular segment spans residues 182 to 208 (HLENGPGQTEVFSQCVTHCSFPQWWHQ). The chain crosses the membrane as a helical span at residues 209-229 (AFYNFFTFICLFIIPLLIMLI). Topologically, residues 230-271 (CNAKIIFTLTQVLQQDSNKLQLNQSKNNIPRARLRTLKMTVA) are cytoplasmic. The chain crosses the membrane as a helical span at residues 272 to 292 (FAASFIVCWTPYYVLGLWYWF). Topologically, residues 293 to 306 (DPGMLHRMSEPVNH) are extracellular. A helical membrane pass occupies residues 307–327 (FFFLFAFLNPCFDPLIYGYFS). Residue Leu-328 is a topological domain, cytoplasmic.

The protein belongs to the G-protein coupled receptor 1 family.

It localises to the cell membrane. Its function is as follows. Receptor for gonadotropin releasing hormone (GnRH) that mediates the action of GnRH to stimulate the secretion of the gonadotropic hormones luteinizing hormone (LH) and follicle-stimulating hormone (FSH). This receptor mediates its action by association with G-proteins that activate a phosphatidylinositol-calcium second messenger system. This chain is Gonadotropin-releasing hormone receptor (GNRHR), found in Cavia porcellus (Guinea pig).